Consider the following 96-residue polypeptide: MLRLDLQFFASKKGVGSTKNGRDSQSKRLGAKRADGQTVTGGSILYRQRGTKIYPGVNVGRGGDDTLYAKVDGVVRFERLGRDRKQVSVYPVAQEA.

Residues 1–9 (MLRLDLQFF) constitute a propeptide that is removed on maturation. The interval 13-35 (KGVGSTKNGRDSQSKRLGAKRAD) is disordered.

The protein belongs to the bacterial ribosomal protein bL27 family. In terms of processing, the N-terminus is cleaved by ribosomal processing cysteine protease Prp.

The chain is Large ribosomal subunit protein bL27 from Bacillus cereus (strain B4264).